The primary structure comprises 156 residues: Protein archease-like (156 aa).

Ca(2+)-binding residues include D25, D155, and I156.

It belongs to the archease family.

Its function is as follows. Component of the tRNA-splicing ligase complex required to facilitate the enzymatic turnover of catalytic subunit RtcB. Plays an important role in a RNA repair and splicing pathway which controls axon regeneration in response to peripheral (PNS) and central nervous system (CNS) injury, by activating splicing of Xbp1 to promote axon regeneration in response to axotomy. This Drosophila melanogaster (Fruit fly) protein is Protein archease-like.